We begin with the raw amino-acid sequence, 75 residues long: Translation initiation factor IF-1, chloroplastic (75 aa).

The protein belongs to the IF-1 family. As to quaternary structure, component of the 30S ribosomal translation pre-initiation complex which assembles on the 30S ribosome in the order IF-2 and IF-3, IF-1 and N-formylmethionyl-tRNA(fMet); mRNA recruitment can occur at any time during PIC assembly.

The protein localises to the plastid. It localises to the chloroplast. One of the essential components for the initiation of protein synthesis. Stabilizes the binding of IF-2 and IF-3 on the 30S subunit to which N-formylmethionyl-tRNA(fMet) subsequently binds. Helps modulate mRNA selection, yielding the 30S pre-initiation complex (PIC). Upon addition of the 50S ribosomal subunit IF-1, IF-2 and IF-3 are released leaving the mature 70S translation initiation complex. The polypeptide is Translation initiation factor IF-1, chloroplastic (infA) (Cucumis sativus (Cucumber)).